Here is a 216-residue protein sequence, read N- to C-terminus: Fucoxanthin-chlorophyll a-c binding protein C, chloroplastic (216 aa).

Residues 1-38 (MKSAIMAVASAAPGLRGPSAFNGAALTTSAKSSSAMKM) constitute a chloroplast transit peptide. The next 3 helical transmembrane spans lie at 80 to 100 (IAML…PGML), 121 to 141 (IPPG…LAVM), and 182 to 202 (GRAA…NNKP).

This sequence belongs to the fucoxanthin chlorophyll protein family. As to quaternary structure, the LHC complex of chromophytic algae is composed of fucoxanthin, chlorophyll A and C bound non-covalently by fucoxanthin chlorophyll proteins (FCPs). The ratio of pigments in this LHC is; fucoxanthin: chlorophyll C: chlorophyll A; (0.6-1): (0.1-0.3): (1).

The protein localises to the plastid. It localises to the chloroplast thylakoid membrane. Functionally, the light-harvesting complex (LHC) functions as a light receptor, it captures and delivers excitation energy to photosystems with which it is closely associated. Energy is transferred from the carotenoid and chlorophyll C (or B) to chlorophyll A and the photosynthetic reaction centers where it is used to synthesize ATP and reducing power. This Macrocystis pyrifera (Giant kelp) protein is Fucoxanthin-chlorophyll a-c binding protein C, chloroplastic (FCPC).